Reading from the N-terminus, the 426-residue chain is Pyrophosphate--fructose 6-phosphate 1-phosphotransferase 1 (426 aa).

G15 is a binding site for diphosphate. D114 is a Mg(2+) binding site. Substrate is bound by residues 140 to 142 (TID), 186 to 188 (MGR), E247, and 308 to 311 (YELR). Residue D142 is the Proton acceptor of the active site.

The protein belongs to the phosphofructokinase type A (PFKA) family. PPi-dependent PFK group II subfamily. Clade 'Short' sub-subfamily. As to quaternary structure, homotetramer. The cofactor is Mg(2+).

It localises to the cytoplasm. The enzyme catalyses beta-D-fructose 6-phosphate + diphosphate = beta-D-fructose 1,6-bisphosphate + phosphate + H(+). It functions in the pathway carbohydrate degradation; glycolysis; D-glyceraldehyde 3-phosphate and glycerone phosphate from D-glucose: step 3/4. Its activity is regulated as follows. Non-allosteric. Its function is as follows. Catalyzes the phosphorylation of D-fructose 6-phosphate, the first committing step of glycolysis. Uses inorganic phosphate (PPi) as phosphoryl donor instead of ATP like common ATP-dependent phosphofructokinases (ATP-PFKs), which renders the reaction reversible, and can thus function both in glycolysis and gluconeogenesis. Consistently, PPi-PFK can replace the enzymes of both the forward (ATP-PFK) and reverse (fructose-bisphosphatase (FBPase)) reactions. The sequence is that of Pyrophosphate--fructose 6-phosphate 1-phosphotransferase 1 (Pfk1) from Trichomonas vaginalis (strain ATCC PRA-98 / G3).